Consider the following 101-residue polypeptide: NAD(P)H-quinone oxidoreductase subunit 4L, chloroplastic (101 aa).

Transmembrane regions (helical) follow at residues 2 to 22 (ILEHVLVLSAYLFLIGLYGLI), 32 to 52 (MCLELILNAVNMNFVTFSDFF), and 61 to 81 (IFCIFVIAIAAAEAAIGLAIV).

It belongs to the complex I subunit 4L family. In terms of assembly, NDH is composed of at least 16 different subunits, 5 of which are encoded in the nucleus.

It localises to the plastid. The protein localises to the chloroplast thylakoid membrane. The enzyme catalyses a plastoquinone + NADH + (n+1) H(+)(in) = a plastoquinol + NAD(+) + n H(+)(out). It carries out the reaction a plastoquinone + NADPH + (n+1) H(+)(in) = a plastoquinol + NADP(+) + n H(+)(out). Its function is as follows. NDH shuttles electrons from NAD(P)H:plastoquinone, via FMN and iron-sulfur (Fe-S) centers, to quinones in the photosynthetic chain and possibly in a chloroplast respiratory chain. The immediate electron acceptor for the enzyme in this species is believed to be plastoquinone. Couples the redox reaction to proton translocation, and thus conserves the redox energy in a proton gradient. This Crucihimalaya wallichii (Rock-cress) protein is NAD(P)H-quinone oxidoreductase subunit 4L, chloroplastic.